The following is a 475-amino-acid chain: Kynureninase (475 aa).

Pyridoxal 5'-phosphate-binding positions include Leu142, Thr143, 170–173 (FPSD), Asp255, His258, and Tyr280. N6-(pyridoxal phosphate)lysine is present on Lys281. Pyridoxal 5'-phosphate contacts are provided by Trp320 and Asn348.

The protein belongs to the kynureninase family. As to quaternary structure, homodimer. The cofactor is pyridoxal 5'-phosphate.

Its subcellular location is the cytoplasm. It catalyses the reaction L-kynurenine + H2O = anthranilate + L-alanine + H(+). The enzyme catalyses 3-hydroxy-L-kynurenine + H2O = 3-hydroxyanthranilate + L-alanine + H(+). It functions in the pathway amino-acid degradation; L-kynurenine degradation; L-alanine and anthranilate from L-kynurenine: step 1/1. It participates in cofactor biosynthesis; NAD(+) biosynthesis; quinolinate from L-kynurenine: step 2/3. In terms of biological role, catalyzes the cleavage of L-kynurenine (L-Kyn) and L-3-hydroxykynurenine (L-3OHKyn) into anthranilic acid (AA) and 3-hydroxyanthranilic acid (3-OHAA), respectively. The chain is Kynureninase (bna5) from Botryotinia fuckeliana (strain B05.10) (Noble rot fungus).